We begin with the raw amino-acid sequence, 498 residues long: MANKESKNVVIIGAGVLSTTFGSMIKELEPDWNIKLYERLDRPGIESSNERNNAGTGHAALCELNYTVQQPDGSIDIEKAKEINEQFEISKQFWGHLVKSGNISNPRDFINPLPHISFVRGKNNVKFLKNRYEAMRNFPMFDNIEYTEDIEEMRKWMPLMMTGRTGNEIMAASKIDEGTDVNYGELTRKMAKSIEKHPNADVQYNHEVINFNRRKDGIWEVKVKNRNSGDVETVLADYVFIGAGGGAIPLLQKTGIPESKHLGGFPISGQFLICTNPDVINEHDVKVYGKEPPGTPPMTVPHLDTRYIDGERTLLFGPFANIGPKFLRNGSNLDLFKSVKPYNITTLLASAVKNLPLIKYSIDQVLMTKEGCMNHLRTFYPEARDEDWQLYTAGKRVQVIKDTKEHGKGFIQFGTEVVNSKDHSVIALLGESPGASTSVSVALEVLEKNFAEYEKDWTPKLQKMIPSYGKSLIDDVKLMRATRKQTSKDLELNYYESK.

The protein belongs to the MQO family. Requires FAD as cofactor.

The catalysed reaction is (S)-malate + a quinone = a quinol + oxaloacetate. It functions in the pathway carbohydrate metabolism; tricarboxylic acid cycle; oxaloacetate from (S)-malate (quinone route): step 1/1. The protein is Probable malate:quinone oxidoreductase 2 of Staphylococcus epidermidis (strain ATCC 35984 / DSM 28319 / BCRC 17069 / CCUG 31568 / BM 3577 / RP62A).